The sequence spans 292 residues: Shikimate dehydrogenase (NADP(+)) (292 aa).

Residues 22–24 (SLS) and serine 69 each bind shikimate. Lysine 73 acts as the Proton acceptor in catalysis. Shikimate-binding residues include asparagine 94 and aspartate 111. Residues 135–139 (GVGGA) and isoleucine 236 contribute to the NADP(+) site. Tyrosine 238 provides a ligand contact to shikimate. Glycine 260 contributes to the NADP(+) binding site.

This sequence belongs to the shikimate dehydrogenase family. Homodimer.

The enzyme catalyses shikimate + NADP(+) = 3-dehydroshikimate + NADPH + H(+). It functions in the pathway metabolic intermediate biosynthesis; chorismate biosynthesis; chorismate from D-erythrose 4-phosphate and phosphoenolpyruvate: step 4/7. Functionally, involved in the biosynthesis of the chorismate, which leads to the biosynthesis of aromatic amino acids. Catalyzes the reversible NADPH linked reduction of 3-dehydroshikimate (DHSA) to yield shikimate (SA). This is Shikimate dehydrogenase (NADP(+)) from Streptococcus pyogenes serotype M3 (strain ATCC BAA-595 / MGAS315).